A 462-amino-acid polypeptide reads, in one-letter code: Gamma-aminobutyric acid receptor subunit alpha-5 (462 aa).

Positions 1 to 31 (MDNGMFSGFIMIKNLLLFCISMNLSSHFGFS) are cleaved as a signal peptide. Over 32-260 (QMPTSSVKDE…FHLKRKIGYF (229 aa)) the chain is Extracellular. An N-linked (GlcNAc...) asparagine glycan is attached at Asn-45. Position 101 (Arg-101) interacts with 4-aminobutanoate. Residue Asn-145 is glycosylated (N-linked (GlcNAc...) asparagine). A 4-aminobutanoate-binding site is contributed by Thr-164. A disulfide bond links Cys-173 and Cys-187. 2 N-linked (GlcNAc...) asparagine glycosylation sites follow: Asn-207 and Asn-236. The chain crosses the membrane as a helical span at residues 261–281 (VIQTYLPCIMTVILSQVSFWL). Residues 282 to 286 (NRESV) are Cytoplasmic-facing. Residues 287–308 (PARTVFGVTTVLTMTTLSISAR) form a helical membrane-spanning segment. Residues 309 to 318 (NSLPKVAYAT) lie on the Extracellular side of the membrane. A helical membrane pass occupies residues 319 to 340 (AMDWFIAVCYAFVFSALIEFAT). At 341 to 427 (VNYFTKRGWA…TYNSISKIDK (87 aa)) the chain is on the cytoplasmic side. A Glycyl lysine isopeptide (Lys-Gly) (interchain with G-Cter in ubiquitin) cross-link involves residue Lys-355. The tract at residues 377-412 (FTTGKMSHPPNIPKEQTPAGTSNTTSVSVKPSEEKT) is disordered. The helical transmembrane segment at 428–448 (MSRIVFPVLFGTFNLVYWATY) threads the bilayer. Residues 449–462 (LNREPVIKGAASPK) lie on the Extracellular side of the membrane.

The protein belongs to the ligand-gated ion channel (TC 1.A.9) family. Gamma-aminobutyric acid receptor (TC 1.A.9.5) subfamily. GABRA5 sub-subfamily. Heteropentamer, formed by a combination of alpha (GABRA1-6), beta (GABRB1-3), gamma (GABRG1-3), delta (GABRD), epsilon (GABRE), rho (GABRR1-3), pi (GABRP) and theta (GABRQ) chains, each subunit exhibiting distinct physiological and pharmacological properties.

Its subcellular location is the postsynaptic cell membrane. It localises to the cell membrane. The catalysed reaction is chloride(in) = chloride(out). Functionally, alpha subunit of the heteropentameric ligand-gated chloride channel gated by gamma-aminobutyric acid (GABA), a major inhibitory neurotransmitter in the brain. GABA-gated chloride channels, also named GABA(A) receptors (GABAAR), consist of five subunits arranged around a central pore and contain GABA active binding site(s) located at the alpha and beta subunit interface(s). When activated by GABA, GABAARs selectively allow the flow of chloride anions across the cell membrane down their electrochemical gradient. GABAARs containing alpha-5/GABRA5 subunits are mainly extrasynaptic and contribute to the tonic GABAergic inhibition in the hippocampus. Extrasynaptic alpha-5-containing GABAARs in CA1 pyramidal neurons play a role in learning and memory processes. The sequence is that of Gamma-aminobutyric acid receptor subunit alpha-5 from Homo sapiens (Human).